A 593-amino-acid chain; its full sequence is Elongation factor 4 (593 aa).

Residues 2–181 enclose the tr-type G domain; it reads KNIRNFCIIA…AVVERIPHPT (180 aa). GTP contacts are provided by residues 14–19 and 128–131; these read DHGKST and NKCD.

Belongs to the TRAFAC class translation factor GTPase superfamily. Classic translation factor GTPase family. LepA subfamily.

Its subcellular location is the cell inner membrane. The catalysed reaction is GTP + H2O = GDP + phosphate + H(+). Required for accurate and efficient protein synthesis under certain stress conditions. May act as a fidelity factor of the translation reaction, by catalyzing a one-codon backward translocation of tRNAs on improperly translocated ribosomes. Back-translocation proceeds from a post-translocation (POST) complex to a pre-translocation (PRE) complex, thus giving elongation factor G a second chance to translocate the tRNAs correctly. Binds to ribosomes in a GTP-dependent manner. The protein is Elongation factor 4 of Phocaeicola vulgatus (strain ATCC 8482 / DSM 1447 / JCM 5826 / CCUG 4940 / NBRC 14291 / NCTC 11154) (Bacteroides vulgatus).